We begin with the raw amino-acid sequence, 358 residues long: Probable (S)-tetrahydroprotoberberine N-methyltransferase 2 (358 aa).

7 residues coordinate S-adenosyl-L-methionine: Ser98, Gly136, Asn160, Gln164, Asp186, Val187, and Ile202. Cys333 is an active-site residue.

The protein belongs to the CFA/CMAS family. In terms of assembly, homodimer.

Its subcellular location is the cytoplasm. The catalysed reaction is (S)-stylopine + S-adenosyl-L-methionine = (S)-cis-N-methylstylopine + S-adenosyl-L-homocysteine. The enzyme catalyses (S)-tetrahydropalmatine + S-adenosyl-L-methionine = (S)-cis-N-methyltetrahydropalmatine + S-adenosyl-L-homocysteine. The protein operates within alkaloid biosynthesis. In terms of biological role, N-methyltransferase with a strict substrate specificity for (R,S)-tetrahydropalmatine or (R,S)-stylopine. The polypeptide is Probable (S)-tetrahydroprotoberberine N-methyltransferase 2 (Papaver bracteatum (Great scarlet poppy)).